A 101-amino-acid chain; its full sequence is Large ribosomal subunit protein uL24 (101 aa).

The protein belongs to the universal ribosomal protein uL24 family. As to quaternary structure, part of the 50S ribosomal subunit.

One of two assembly initiator proteins, it binds directly to the 5'-end of the 23S rRNA, where it nucleates assembly of the 50S subunit. In terms of biological role, one of the proteins that surrounds the polypeptide exit tunnel on the outside of the subunit. The protein is Large ribosomal subunit protein uL24 of Streptococcus thermophilus (strain CNRZ 1066).